A 540-amino-acid polypeptide reads, in one-letter code: Light-independent protochlorophyllide reductase subunit B (540 aa).

Aspartate 36 is a [4Fe-4S] cluster binding site. Aspartate 292 acts as the Proton donor in catalysis. 428–429 (GL) contacts substrate. Positions 451 to 490 (SNVASGVEPSTPSVSSEVSASSSASPEASAPTPSPDGDMV) are disordered. The segment covering 457 to 481 (VEPSTPSVSSEVSASSSASPEASAP) has biased composition (low complexity).

Belongs to the ChlB/BchB/BchZ family. In terms of assembly, protochlorophyllide reductase is composed of three subunits; BchL, BchN and BchB. Forms a heterotetramer of two BchB and two BchN subunits. It depends on [4Fe-4S] cluster as a cofactor.

It catalyses the reaction chlorophyllide a + oxidized 2[4Fe-4S]-[ferredoxin] + 2 ADP + 2 phosphate = protochlorophyllide a + reduced 2[4Fe-4S]-[ferredoxin] + 2 ATP + 2 H2O. It functions in the pathway porphyrin-containing compound metabolism; bacteriochlorophyll biosynthesis (light-independent). Its function is as follows. Component of the dark-operative protochlorophyllide reductase (DPOR) that uses Mg-ATP and reduced ferredoxin to reduce ring D of protochlorophyllide (Pchlide) to form chlorophyllide a (Chlide). This reaction is light-independent. The NB-protein (BchN-BchB) is the catalytic component of the complex. In Chlorobium chlorochromatii (strain CaD3), this protein is Light-independent protochlorophyllide reductase subunit B.